The sequence spans 476 residues: Bifunctional protein HldE (476 aa).

Positions 1–319 are ribokinase; sequence MKVSLPAFEK…EALALHHGES (319 aa). 195-198 is a binding site for ATP; it reads NMSE. Residue D264 is part of the active site. Positions 345–476 are cytidylyltransferase; sequence MTNGCFDILH…AIIQNIMANQ (132 aa).

This sequence in the N-terminal section; belongs to the carbohydrate kinase PfkB family. In the C-terminal section; belongs to the cytidylyltransferase family. In terms of assembly, homodimer.

It carries out the reaction D-glycero-beta-D-manno-heptose 7-phosphate + ATP = D-glycero-beta-D-manno-heptose 1,7-bisphosphate + ADP + H(+). The enzyme catalyses D-glycero-beta-D-manno-heptose 1-phosphate + ATP + H(+) = ADP-D-glycero-beta-D-manno-heptose + diphosphate. It functions in the pathway nucleotide-sugar biosynthesis; ADP-L-glycero-beta-D-manno-heptose biosynthesis; ADP-L-glycero-beta-D-manno-heptose from D-glycero-beta-D-manno-heptose 7-phosphate: step 1/4. The protein operates within nucleotide-sugar biosynthesis; ADP-L-glycero-beta-D-manno-heptose biosynthesis; ADP-L-glycero-beta-D-manno-heptose from D-glycero-beta-D-manno-heptose 7-phosphate: step 3/4. Functionally, catalyzes the phosphorylation of D-glycero-D-manno-heptose 7-phosphate at the C-1 position to selectively form D-glycero-beta-D-manno-heptose-1,7-bisphosphate. In terms of biological role, catalyzes the ADP transfer from ATP to D-glycero-beta-D-manno-heptose 1-phosphate, yielding ADP-D-glycero-beta-D-manno-heptose. This Shewanella baltica (strain OS185) protein is Bifunctional protein HldE.